A 616-amino-acid chain; its full sequence is 2-isopropylmalate synthase (616 aa).

Residues 1-34 form a disordered region; sequence MSPNDAFISAPAKIETPVGPRNEGQPAWNKQRGS. Residues 67–341 enclose the Pyruvate carboxyltransferase domain; the sequence is PQWCAVDLRD…DPQLDFTDIR (275 aa). The Mg(2+) site is built by D76, H280, H282, and N316. Positions 490–616 are regulatory domain; it reads RTAPVEQIAL…NHEAVLAGGV (127 aa).

It belongs to the alpha-IPM synthase/homocitrate synthase family. LeuA type 2 subfamily. Homodimer. The cofactor is Mg(2+).

The protein resides in the cytoplasm. It catalyses the reaction 3-methyl-2-oxobutanoate + acetyl-CoA + H2O = (2S)-2-isopropylmalate + CoA + H(+). The protein operates within amino-acid biosynthesis; L-leucine biosynthesis; L-leucine from 3-methyl-2-oxobutanoate: step 1/4. With respect to regulation, inhibited by L-leucine, the pathway end product. Catalyzes the condensation of the acetyl group of acetyl-CoA with 3-methyl-2-oxobutanoate (2-ketoisovalerate) to form 3-carboxy-3-hydroxy-4-methylpentanoate (2-isopropylmalate). Complements an E.coli leuA deletion. This is 2-isopropylmalate synthase from Corynebacterium glutamicum (strain ATCC 13032 / DSM 20300 / JCM 1318 / BCRC 11384 / CCUG 27702 / LMG 3730 / NBRC 12168 / NCIMB 10025 / NRRL B-2784 / 534).